The chain runs to 152 residues: Large ribosomal subunit protein bL34c (152 aa).

The N-terminal 91 residues, 1-91 (MATLSLLSTG…DRCRRFVVRA (91 aa)), are a transit peptide targeting the chloroplast.

As to quaternary structure, component of the chloroplast large ribosomal subunit (LSU). Mature 70S chloroplast ribosomes of higher plants consist of a small (30S) and a large (50S) subunit. The 30S small subunit contains 1 molecule of ribosomal RNA (16S rRNA) and 24 different proteins. The 50S large subunit contains 3 rRNA molecules (23S, 5S and 4.5S rRNA) and 33 different proteins.

It is found in the plastid. The protein localises to the chloroplast. Functionally, component of the chloroplast ribosome (chloro-ribosome), a dedicated translation machinery responsible for the synthesis of chloroplast genome-encoded proteins, including proteins of the transcription and translation machinery and components of the photosynthetic apparatus. In Spinacia oleracea (Spinach), this protein is Large ribosomal subunit protein bL34c (RPL34).